The following is a 67-amino-acid chain: MKVYDCCDLVRELYSQIGSGDQGYIPKAITCAVKTLNDLAADESLPKEARDRAAFAAANLLISDFED.

The protein belongs to the UPF0253 family.

The protein is UPF0253 protein VS_2370 of Vibrio atlanticus (strain LGP32) (Vibrio splendidus (strain Mel32)).